A 124-amino-acid polypeptide reads, in one-letter code: V-type proton ATPase subunit F (124 aa).

Belongs to the V-ATPase F subunit family. As to quaternary structure, V-ATPase is a heteromultimeric enzyme composed of a peripheral catalytic V1 complex (components A to H) attached to an integral membrane V0 proton pore complex (components: a, c, c', c'', d, e, f and VOA1).

It localises to the vacuole membrane. Functionally, subunit of the V1 complex of vacuolar(H+)-ATPase (V-ATPase), a multisubunit enzyme composed of a peripheral complex (V1) that hydrolyzes ATP and a membrane integral complex (V0) that translocates protons. V-ATPase is responsible for acidifying and maintaining the pH of intracellular compartments. The chain is V-type proton ATPase subunit F (vma-7) from Neurospora crassa (strain ATCC 24698 / 74-OR23-1A / CBS 708.71 / DSM 1257 / FGSC 987).